A 221-amino-acid chain; its full sequence is MDDESRLVAYQKAKYIKENMFGRTFHLHFHILENLANTFEKDDLTYVEIGTFEGGSLSLMMQNKKIKNLIGIDPLCIAGQEENLKKNTVKFNIHGSNVQHIKRYSYDEAIFPILDTLPNGIDILFIDGDHQYQPVINDFNLYYKYVNKGGYIVFDDYQDYRWSPQVMPAVNKIVADIQAGKYSPYKFEVIGCYPNNTGEVVSNIPVHGDMNNEFILKVVDK.

This is an uncharacterized protein from Acanthamoeba polyphaga (Amoeba).